A 234-amino-acid polypeptide reads, in one-letter code: Phosphoribosylformylglycinamidine synthase subunit PurQ (234 aa).

Positions 3-231 (AAVVVFPGSN…ALYLERRKDH (229 aa)) constitute a Glutamine amidotransferase type-1 domain. The active-site Nucleophile is cysteine 87. Residues histidine 200 and glutamate 202 contribute to the active site.

In terms of assembly, part of the FGAM synthase complex composed of 1 PurL, 1 PurQ and 2 PurS subunits.

It localises to the cytoplasm. The catalysed reaction is N(2)-formyl-N(1)-(5-phospho-beta-D-ribosyl)glycinamide + L-glutamine + ATP + H2O = 2-formamido-N(1)-(5-O-phospho-beta-D-ribosyl)acetamidine + L-glutamate + ADP + phosphate + H(+). It carries out the reaction L-glutamine + H2O = L-glutamate + NH4(+). Its pathway is purine metabolism; IMP biosynthesis via de novo pathway; 5-amino-1-(5-phospho-D-ribosyl)imidazole from N(2)-formyl-N(1)-(5-phospho-D-ribosyl)glycinamide: step 1/2. Functionally, part of the phosphoribosylformylglycinamidine synthase complex involved in the purines biosynthetic pathway. Catalyzes the ATP-dependent conversion of formylglycinamide ribonucleotide (FGAR) and glutamine to yield formylglycinamidine ribonucleotide (FGAM) and glutamate. The FGAM synthase complex is composed of three subunits. PurQ produces an ammonia molecule by converting glutamine to glutamate. PurL transfers the ammonia molecule to FGAR to form FGAM in an ATP-dependent manner. PurS interacts with PurQ and PurL and is thought to assist in the transfer of the ammonia molecule from PurQ to PurL. The protein is Phosphoribosylformylglycinamidine synthase subunit PurQ of Pseudothermotoga lettingae (strain ATCC BAA-301 / DSM 14385 / NBRC 107922 / TMO) (Thermotoga lettingae).